A 219-amino-acid polypeptide reads, in one-letter code: Large ribosomal subunit protein uL1 (219 aa).

The protein belongs to the universal ribosomal protein uL1 family. As to quaternary structure, part of the 50S ribosomal subunit.

Its function is as follows. Probably involved in E site tRNA release. Binds directly to 23S rRNA. Functionally, protein L1 is also a translational repressor protein, it controls the translation of its operon by binding to its mRNA. In Methanocaldococcus jannaschii (strain ATCC 43067 / DSM 2661 / JAL-1 / JCM 10045 / NBRC 100440) (Methanococcus jannaschii), this protein is Large ribosomal subunit protein uL1.